Reading from the N-terminus, the 248-residue chain is Phosphoribosylaminoimidazole-succinocarboxamide synthase (248 aa).

The protein belongs to the SAICAR synthetase family.

The enzyme catalyses 5-amino-1-(5-phospho-D-ribosyl)imidazole-4-carboxylate + L-aspartate + ATP = (2S)-2-[5-amino-1-(5-phospho-beta-D-ribosyl)imidazole-4-carboxamido]succinate + ADP + phosphate + 2 H(+). It participates in purine metabolism; IMP biosynthesis via de novo pathway; 5-amino-1-(5-phospho-D-ribosyl)imidazole-4-carboxamide from 5-amino-1-(5-phospho-D-ribosyl)imidazole-4-carboxylate: step 1/2. This is Phosphoribosylaminoimidazole-succinocarboxamide synthase (purC) from Methanothermobacter thermautotrophicus (strain ATCC 29096 / DSM 1053 / JCM 10044 / NBRC 100330 / Delta H) (Methanobacterium thermoautotrophicum).